We begin with the raw amino-acid sequence, 155 residues long: Leader peptidase HopD (155 aa).

This sequence belongs to the peptidase A24 family.

In Salmonella typhimurium (strain LT2 / SGSC1412 / ATCC 700720), this protein is Leader peptidase HopD (hopD).